The following is a 230-amino-acid chain: Metaxin-2 homolog (230 aa).

This sequence belongs to the metaxin family. As to quaternary structure, associates with the mitochondrial contact site and cristae organizing system (MICOS) complex (also known as MINOS or MitOS complex).

It is found in the mitochondrion outer membrane. Functionally, involved in transport of proteins into the mitochondrion. The polypeptide is Metaxin-2 homolog (mtx-2) (Caenorhabditis elegans).